A 170-amino-acid polypeptide reads, in one-letter code: Cyclic pyranopterin monophosphate synthase (170 aa).

Residues 75 to 77 (LCH) and 113 to 114 (ME) contribute to the substrate site. Residue Asp-128 is part of the active site.

It belongs to the MoaC family. As to quaternary structure, homohexamer; trimer of dimers.

The enzyme catalyses (8S)-3',8-cyclo-7,8-dihydroguanosine 5'-triphosphate = cyclic pyranopterin phosphate + diphosphate. The protein operates within cofactor biosynthesis; molybdopterin biosynthesis. Functionally, catalyzes the conversion of (8S)-3',8-cyclo-7,8-dihydroguanosine 5'-triphosphate to cyclic pyranopterin monophosphate (cPMP). The polypeptide is Cyclic pyranopterin monophosphate synthase (Pelotomaculum thermopropionicum (strain DSM 13744 / JCM 10971 / SI)).